The chain runs to 338 residues: tRNA N6-adenosine threonylcarbamoyltransferase (338 aa).

Fe cation contacts are provided by H111 and H115. Residues 134 to 138 (LVSGG), D167, G180, and N272 contribute to the substrate site. D300 provides a ligand contact to Fe cation.

Belongs to the KAE1 / TsaD family. Fe(2+) serves as cofactor.

Its subcellular location is the cytoplasm. It catalyses the reaction L-threonylcarbamoyladenylate + adenosine(37) in tRNA = N(6)-L-threonylcarbamoyladenosine(37) in tRNA + AMP + H(+). In terms of biological role, required for the formation of a threonylcarbamoyl group on adenosine at position 37 (t(6)A37) in tRNAs that read codons beginning with adenine. Is involved in the transfer of the threonylcarbamoyl moiety of threonylcarbamoyl-AMP (TC-AMP) to the N6 group of A37, together with TsaE and TsaB. TsaD likely plays a direct catalytic role in this reaction. In Shewanella sp. (strain ANA-3), this protein is tRNA N6-adenosine threonylcarbamoyltransferase.